A 528-amino-acid polypeptide reads, in one-letter code: GMP synthase [glutamine-hydrolyzing] (528 aa).

A Glutamine amidotransferase type-1 domain is found at 3–199; the sequence is KVAIIDFGSQ…FLDIAGCQKD (197 aa). The Nucleophile role is filled by Cys83. Catalysis depends on residues His174 and Glu176. Positions 200 to 394 constitute a GMPS ATP-PPase domain; sequence WTVTSFIDDQ…LGISTEILMR (195 aa). An ATP-binding site is contributed by 227 to 233; the sequence is SGGVDSS.

In terms of assembly, homodimer.

It carries out the reaction XMP + L-glutamine + ATP + H2O = GMP + L-glutamate + AMP + diphosphate + 2 H(+). The protein operates within purine metabolism; GMP biosynthesis; GMP from XMP (L-Gln route): step 1/1. Its function is as follows. Catalyzes the synthesis of GMP from XMP. In Ehrlichia ruminantium (strain Gardel), this protein is GMP synthase [glutamine-hydrolyzing].